Consider the following 270-residue polypeptide: Surfeit locus protein 4 homolog (270 aa).

6 helical membrane passes run 65 to 85, 93 to 113, 115 to 135, 178 to 198, 206 to 226, and 243 to 263; these read FLAT…CGMV, IAVG…SILW, FQFL…LAEA, LSVW…LVVL, ALIL…WWTI, and TLSV…GVSM. A Di-lysine motif motif is present at residues 267-270; that stretch reads KKKW.

Belongs to the SURF4 family.

The protein localises to the endoplasmic reticulum membrane. Its function is as follows. Endoplasmic reticulum cargo receptor that mediates the export of lipoproteins by recruiting cargos into COPII vesicles to facilitate their secretion. The sequence is that of Surfeit locus protein 4 homolog from Drosophila melanogaster (Fruit fly).